The following is a 902-amino-acid chain: Probable polyribonucleotide nucleotidyltransferase 1, chloroplastic (902 aa).

Residues 1-66 (MLATPGALHH…RRRAAGARVR (66 aa)) constitute a chloroplast transit peptide. Positions 44–53 (VAASASTSRR) are enriched in low complexity. The tract at residues 44–93 (VAASASTSRRGGARRRAAGARVRASVGEEAPPVVTEEASTSGGPTKFSTK) is disordered. The span at 80-91 (EASTSGGPTKFS) shows a compositional bias: polar residues. In terms of domain architecture, KH spans 693–753 (PLIHVMKVKP…SSLEKSKAII (61 aa)). Positions 763–832 (GEIYRNCEIK…DKGQLRLSSR (70 aa)) constitute an S1 motif domain. A disordered region spans residues 833–902 (ALLPDANQES…ASQGSEMGTE (70 aa)). Positions 839-850 (NQESSSKQQAGG) are enriched in polar residues. Positions 852-862 (TREKAPQKDNL) are enriched in basic and acidic residues. Residues 877 to 888 (EASTAENNATAS) are compositionally biased toward low complexity.

It belongs to the polyribonucleotide nucleotidyltransferase family.

It localises to the plastid. The protein localises to the chloroplast. The catalysed reaction is RNA(n+1) + phosphate = RNA(n) + a ribonucleoside 5'-diphosphate. Its function is as follows. Involved in the metabolism of all major classes of plastid RNAs. Required for efficient 3'-end processing of mRNAs and 3'-end maturation of rRNA transcripts, but is not sufficient to mediate their degradation. Mediates tRNA degradation. May function as a poly(A) mRNA 3'-5' degrading phosphorylase. The sequence is that of Probable polyribonucleotide nucleotidyltransferase 1, chloroplastic (PNP1) from Oryza sativa subsp. japonica (Rice).